The chain runs to 330 residues: Phosphate acyltransferase (330 aa).

It belongs to the PlsX family. In terms of assembly, homodimer. Probably interacts with PlsY.

Its subcellular location is the cytoplasm. It carries out the reaction a fatty acyl-[ACP] + phosphate = an acyl phosphate + holo-[ACP]. It functions in the pathway lipid metabolism; phospholipid metabolism. Functionally, catalyzes the reversible formation of acyl-phosphate (acyl-PO(4)) from acyl-[acyl-carrier-protein] (acyl-ACP). This enzyme utilizes acyl-ACP as fatty acyl donor, but not acyl-CoA. This chain is Phosphate acyltransferase, found in Streptococcus agalactiae serotype Ia (strain ATCC 27591 / A909 / CDC SS700).